The primary structure comprises 256 residues: MALAKRIIPCLDVDNGRVVKGVKFENIRDAGDPVEIARRYDEQGADEITFLDITASVDGRDTTLHTVERMASQVFIPLTVGGGVRTVQDIRNLLNAGADKVSINTAAVFNPEFVGEAAQHFGSQCIVVAIDAKKVSGPGETPRWEIFTHGGRKPTGLDAVEWAMKMEGLGAGEILLTSMDQDGMKNGFDLGVTRAISDALGIPVIASGGVGNLQHLADGVIEGHASAVLAASIFHFGEYTVPEAKAYMAARGIVVR.

Residues Asp-12 and Asp-131 contribute to the active site.

Belongs to the HisA/HisF family. As to quaternary structure, heterodimer of HisH and HisF.

Its subcellular location is the cytoplasm. The enzyme catalyses 5-[(5-phospho-1-deoxy-D-ribulos-1-ylimino)methylamino]-1-(5-phospho-beta-D-ribosyl)imidazole-4-carboxamide + L-glutamine = D-erythro-1-(imidazol-4-yl)glycerol 3-phosphate + 5-amino-1-(5-phospho-beta-D-ribosyl)imidazole-4-carboxamide + L-glutamate + H(+). Its pathway is amino-acid biosynthesis; L-histidine biosynthesis; L-histidine from 5-phospho-alpha-D-ribose 1-diphosphate: step 5/9. IGPS catalyzes the conversion of PRFAR and glutamine to IGP, AICAR and glutamate. The HisF subunit catalyzes the cyclization activity that produces IGP and AICAR from PRFAR using the ammonia provided by the HisH subunit. This Pseudomonas fluorescens (strain SBW25) protein is Imidazole glycerol phosphate synthase subunit HisF.